A 1044-amino-acid chain; its full sequence is Isoleucine--tRNA ligase (1044 aa).

The short motif at 48 to 58 (PFATGLPHFGH) is the 'HIGH' region element. Residues 594 to 598 (KMSKS) carry the 'KMSKS' region motif. Position 597 (lysine 597) interacts with ATP.

It belongs to the class-I aminoacyl-tRNA synthetase family. IleS type 2 subfamily. As to quaternary structure, monomer. Zn(2+) is required as a cofactor.

It is found in the cytoplasm. It catalyses the reaction tRNA(Ile) + L-isoleucine + ATP = L-isoleucyl-tRNA(Ile) + AMP + diphosphate. In terms of biological role, catalyzes the attachment of isoleucine to tRNA(Ile). As IleRS can inadvertently accommodate and process structurally similar amino acids such as valine, to avoid such errors it has two additional distinct tRNA(Ile)-dependent editing activities. One activity is designated as 'pretransfer' editing and involves the hydrolysis of activated Val-AMP. The other activity is designated 'posttransfer' editing and involves deacylation of mischarged Val-tRNA(Ile). The chain is Isoleucine--tRNA ligase from Borrelia duttonii (strain Ly).